The primary structure comprises 215 residues: Protein ERP2 (215 aa).

Positions 1–25 (MIKSTIALPSFFIVLILALVNSVAA) are cleaved as a signal peptide. At 26–182 (SSSYAPVAIS…TVNSTESRLT (157 aa)) the chain is on the lumenal side. Residues 41–123 (KECLYYDMVT…LKKVEITLEK (83 aa)) form the GOLD domain. A helical transmembrane segment spans residues 183-203 (WLSILIIIIIAVISIAQVLLI). Residues 204-215 (QFLFTGRQKNYV) are Cytoplasmic-facing.

This sequence belongs to the EMP24/GP25L family. Associates with EMP24, ERV25 and ERP1.

The protein resides in the endoplasmic reticulum membrane. In terms of biological role, involved in vesicular protein trafficking. This chain is Protein ERP2 (ERP2), found in Saccharomyces cerevisiae (strain ATCC 204508 / S288c) (Baker's yeast).